We begin with the raw amino-acid sequence, 197 residues long: Small ribosomal subunit protein uS4 (197 aa).

One can recognise an S4 RNA-binding domain in the interval 87–147 (LRLDNVLFRL…EKSKSSARYK (61 aa)).

This sequence belongs to the universal ribosomal protein uS4 family. As to quaternary structure, part of the 30S ribosomal subunit. Contacts protein S5. The interaction surface between S4 and S5 is involved in control of translational fidelity.

In terms of biological role, one of the primary rRNA binding proteins, it binds directly to 16S rRNA where it nucleates assembly of the body of the 30S subunit. Its function is as follows. With S5 and S12 plays an important role in translational accuracy. The chain is Small ribosomal subunit protein uS4 from Lachnospira eligens (strain ATCC 27750 / DSM 3376 / VPI C15-48 / C15-B4) (Eubacterium eligens).